The sequence spans 137 residues: Holo-[acyl-carrier-protein] synthase (137 aa).

Mg(2+)-binding residues include D8 and E57.

It belongs to the P-Pant transferase superfamily. AcpS family. The cofactor is Mg(2+).

The protein localises to the cytoplasm. The enzyme catalyses apo-[ACP] + CoA = holo-[ACP] + adenosine 3',5'-bisphosphate + H(+). Functionally, transfers the 4'-phosphopantetheine moiety from coenzyme A to a Ser of acyl-carrier-protein. The polypeptide is Holo-[acyl-carrier-protein] synthase (Cereibacter sphaeroides (strain ATCC 17029 / ATH 2.4.9) (Rhodobacter sphaeroides)).